Here is a 420-residue protein sequence, read N- to C-terminus: Probable acetate kinase (420 aa).

Asparagine 10 lines the Mg(2+) pocket. ATP is bound at residue lysine 17. Arginine 97 serves as a coordination point for substrate. The active-site Proton donor/acceptor is the aspartate 153. An ATP-binding site is contributed by 213–217 (HIGSG). Glutamate 403 serves as a coordination point for Mg(2+).

This sequence belongs to the acetokinase family. The cofactor is Mg(2+).

The catalysed reaction is acetate + ATP = acetyl phosphate + ADP. The protein operates within metabolic intermediate biosynthesis; acetyl-CoA biosynthesis; acetyl-CoA from acetate: step 1/2. This chain is Probable acetate kinase, found in Emericella nidulans (strain FGSC A4 / ATCC 38163 / CBS 112.46 / NRRL 194 / M139) (Aspergillus nidulans).